A 1547-amino-acid chain; its full sequence is Tubby-related protein 4 (1547 aa).

WD repeat units follow at residues 80-119 (GHNSEVVLVRWNEPYQKLATCDADGGIFVWIQYEGRWSVE), 123-162 (DRGAQVSDFTWSHDGTQALISYRDGFVLVGSVSGQRHWSS), and 165-204 (NLESQITCGIWTPDDQQVLFGTADGQVIVMDCHGRMLAHV). One can recognise an SOCS box domain in the interval 364 to 414 (ALYVVRVEHRVSSLQLLCQQAIASTLREDKDVNKLTLPPRLCSYLSTAFIP). Positions 530 to 580 (SPKISRSSKSPKLPRISIEARKSPKLPRAAQEISRSPRLPMRKPSMGSPSL) are disordered. Low complexity predominate over residues 533–546 (ISRSSKSPKLPRIS). Ser577 bears the Phosphoserine mark. 2 positions are modified to asymmetric dimethylarginine: Arg949 and Arg954. Phosphoserine is present on residues Ser1347 and Ser1378. Positions 1374 to 1414 (SLISSPRLGREKKKVKSQKDQLKSKKLNKTNEFQDSSESEP) are disordered. Residues 1436-1547 (SKRSLRTASE…ALANVTQRLK (112 aa)) are TUB.

The protein belongs to the TUB family.

Its subcellular location is the cytoplasm. It functions in the pathway protein modification; protein ubiquitination. May be a substrate-recognition component of a SCF-like ECS (Elongin-Cullin-SOCS-box protein) E3 ubiquitin ligase complex which mediates the ubiquitination and subsequent proteasomal degradation of target proteins. The chain is Tubby-related protein 4 (Tulp4) from Mus musculus (Mouse).